The sequence spans 436 residues: Magnesium transporter MRS2-B (436 aa).

2 stretches are compositionally biased toward low complexity: residues M1–A14 and V29–G54. Positions M1–L60 are disordered. Residues L176–D242 are a coiled coil. Helical transmembrane passes span L372 to G392 and W408 to F428. Residues G392–N394 carry the Required for magnesium transport activity motif.

Belongs to the CorA metal ion transporter (MIT) (TC 1.A.35.5) family.

It is found in the membrane. Functionally, magnesium transporter that may mediate the influx of magnesium. In Oryza sativa subsp. indica (Rice), this protein is Magnesium transporter MRS2-B (MRS2-B).